A 316-amino-acid chain; its full sequence is 4-hydroxyphenylacetate decarboxylase activating enzyme (316 aa).

Residues 20-307 form the Radical SAM core domain; the sequence is HDGPGCRTTV…QDIFLDNGIA (288 aa). Residues Cys-34, Cys-38, Cys-41, Cys-60, Cys-66, Cys-69, and Cys-105 each contribute to the [4Fe-4S] cluster site. 40-42 contributes to the S-adenosyl-L-methionine binding site; sequence WCA. The 4Fe-4S ferredoxin-type domain occupies 84 to 115; the sequence is NKPVIDWNICKDCESFECVNSCYYNAFKLCAK. S-adenosyl-L-methionine is bound by residues Gly-144, 193–195, and His-267; that span reads DIK.

Belongs to the organic radical-activating enzymes family. In terms of assembly, monomer. Requires [4Fe-4S] cluster as cofactor.

The enzyme catalyses glycyl-[protein] + reduced [flavodoxin] + S-adenosyl-L-methionine = glycin-2-yl radical-[protein] + semiquinone [flavodoxin] + 5'-deoxyadenosine + L-methionine + H(+). Functionally, catalyzes activation of 4-hydroxyphenylacetate decarboxylase under anaerobic conditions by generation of an organic free radical on a glycine residue, via a homolytic cleavage of S-adenosyl-L-methionine (SAM). The protein is 4-hydroxyphenylacetate decarboxylase activating enzyme of Clostridioides difficile (strain CD196) (Peptoclostridium difficile).